A 148-amino-acid polypeptide reads, in one-letter code: Small ribosomal subunit protein eS19 (148 aa).

Belongs to the eukaryotic ribosomal protein eS19 family.

In Dictyostelium discoideum (Social amoeba), this protein is Small ribosomal subunit protein eS19 (rps19).